The chain runs to 253 residues: Flap endonuclease Xni (253 aa).

Aspartate 105 is a Mg(2+) binding site. One can recognise a 5'-3' exonuclease domain in the interval 162–251 (ERHQLLDYIA…HLKLSDLRVN (90 aa)). 4 residues coordinate K(+): leucine 172, proline 181, isoleucine 183, and isoleucine 186. The tract at residues 185-190 (GIGPKS) is interaction with DNA.

It belongs to the Xni family. Mg(2+) serves as cofactor. It depends on K(+) as a cofactor.

Has flap endonuclease activity. During DNA replication, flap endonucleases cleave the 5'-overhanging flap structure that is generated by displacement synthesis when DNA polymerase encounters the 5'-end of a downstream Okazaki fragment. The sequence is that of Flap endonuclease Xni from Shewanella amazonensis (strain ATCC BAA-1098 / SB2B).